Reading from the N-terminus, the 235-residue chain is tRNA (cytidine-2'-O-)-methyltransferase TrmJ (235 aa).

S-adenosyl-L-methionine-binding positions include 77–79 (TSS), Gly111, Ile131, and 138–140 (PVL).

Belongs to the class IV-like SAM-binding methyltransferase superfamily. RNA methyltransferase TrmH family. In terms of assembly, homodimer.

The protein localises to the cytoplasm. The enzyme catalyses cytidine(32) in tRNA + S-adenosyl-L-methionine = 2'-O-methylcytidine(32) in tRNA + S-adenosyl-L-homocysteine + H(+). Functionally, catalyzes the formation of 2'O-methylated cytidine (Cm32) at position 32 in tRNA. Is specific for cytidine. This Sulfolobus acidocaldarius (strain ATCC 33909 / DSM 639 / JCM 8929 / NBRC 15157 / NCIMB 11770) protein is tRNA (cytidine-2'-O-)-methyltransferase TrmJ.